The following is a 309-amino-acid chain: L-lactate dehydrogenase (309 aa).

NAD(+) contacts are provided by residues V12, D33, R38, Y63, and 77–78; that span reads GA. Substrate is bound by residues Q80, R86, and 118–121; that span reads NPVD. NAD(+) is bound by residues 116–118 and S141; that span reads ATN. Substrate is bound at residue 146-149; the sequence is DSAR. Residues R151 and H166 each coordinate beta-D-fructose 1,6-bisphosphate. H173 serves as the catalytic Proton acceptor. Y219 carries the post-translational modification Phosphotyrosine. T228 serves as a coordination point for substrate.

The protein belongs to the LDH/MDH superfamily. LDH family. As to quaternary structure, homotetramer.

The protein localises to the cytoplasm. It catalyses the reaction (S)-lactate + NAD(+) = pyruvate + NADH + H(+). The protein operates within fermentation; pyruvate fermentation to lactate; (S)-lactate from pyruvate: step 1/1. Its activity is regulated as follows. Allosterically activated by fructose 1,6-bisphosphate (FBP). Functionally, catalyzes the conversion of lactate to pyruvate. This chain is L-lactate dehydrogenase, found in Nitratidesulfovibrio vulgaris (strain ATCC 29579 / DSM 644 / CCUG 34227 / NCIMB 8303 / VKM B-1760 / Hildenborough) (Desulfovibrio vulgaris).